Consider the following 629-residue polypeptide: (-)-alpha-pinene synthase, chloroplastic (629 aa).

The N-terminal 48 residues, 1-48 (MSPVSVISLPSDLCLPTSFIDRSGRELIPLHITIPNVAMRRQGKLMTR), are a transit peptide targeting the chloroplast. D380, D384, and D532 together coordinate Mg(2+). Positions 380 to 384 (DDMYD) match the DDXXD motif motif. S540 provides a ligand contact to K(+).

It belongs to the terpene synthase family. Tpsd subfamily. Mg(2+) serves as cofactor. It depends on Mn(2+) as a cofactor. Requires K(+) as cofactor.

The protein localises to the plastid. Its subcellular location is the chloroplast. The enzyme catalyses (2E)-geranyl diphosphate = (1S,5S)-alpha-pinene + diphosphate. Its pathway is terpene metabolism; oleoresin biosynthesis. In terms of biological role, involved in defensive oleoresin formation in conifers in response to insect attack or other injury. Involved in monoterpene (C10) olefins biosynthesis. Produces mainly (-)-alpha-pinene (79%) and lesser amounts of (-)-beta-pinene (4.2%), nearly racemic mixtures of camphene (2.8% (+)/2.2% (-)) and limonene (2.4% (+)/3.7% (-)), as well as small amounts of (+)-alpha-pinene (3.3%) and (+)-beta-pinene (2.4%). The protein is (-)-alpha-pinene synthase, chloroplastic (PT1) of Pinus taeda (Loblolly pine).